The following is a 361-amino-acid chain: Mitochondrial fission regulator 2 (361 aa).

Ser137 carries the phosphoserine modification. Disordered stretches follow at residues Phe191 to Met286 and Leu298 to Pro322. Residues Val219–Gln231 are compositionally biased toward pro residues. A compositionally biased stretch (low complexity) spans Phe232–Pro244. Over residues His250–Asp282 the composition is skewed to basic and acidic residues. Phosphoserine is present on residues Ser304 and Ser340.

It belongs to the MTFR1 family. Expressed predominantly in testis (at protein level). Expressed to a lower extent in spleen.

It localises to the mitochondrion. May play a role in mitochondrial aerobic respiration essentially in the testis. Can also promote mitochondrial fission. The protein is Mitochondrial fission regulator 2 (Mtfr2) of Mus musculus (Mouse).